The primary structure comprises 50 residues: METTNFGFIASLLFVGVPTIFLIGLFISTQDGEKSSFFSDSSKGKLGPKR.

A helical transmembrane segment spans residues Gly-7–Ile-27.

It belongs to the PsbM family. As to quaternary structure, PSII is composed of 1 copy each of membrane proteins PsbA, PsbB, PsbC, PsbD, PsbE, PsbF, PsbH, PsbI, PsbJ, PsbK, PsbL, PsbM, PsbT, PsbX, PsbY, Psb30/Ycf12, peripheral proteins PsbO, CyanoQ (PsbQ), PsbU, PsbV and a large number of cofactors. It forms dimeric complexes.

Its subcellular location is the cellular thylakoid membrane. One of the components of the core complex of photosystem II (PSII). PSII is a light-driven water:plastoquinone oxidoreductase that uses light energy to abstract electrons from H(2)O, generating O(2) and a proton gradient subsequently used for ATP formation. It consists of a core antenna complex that captures photons, and an electron transfer chain that converts photonic excitation into a charge separation. This subunit is found at the monomer-monomer interface. The protein is Photosystem II reaction center protein M of Prochlorococcus marinus (strain MIT 9312).